A 545-amino-acid polypeptide reads, in one-letter code: Acetyltransferase BOT5 (545 aa).

A signal peptide spans 1–19; that stretch reads MATIPLFFSLILFLRLYHA. Residues asparagine 70 and asparagine 198 are each glycosylated (N-linked (GlcNAc...) asparagine). Histidine 208 acts as the Proton acceptor in catalysis. N-linked (GlcNAc...) asparagine glycosylation is found at asparagine 346 and asparagine 445. The segment at 466–493 is disordered; sequence GAGNQKSSSTRKAARHTEPTQAQTQPGR.

Belongs to the plant acyltransferase family.

The protein operates within secondary metabolite biosynthesis. Its function is as follows. Acetyltransferase; part of the gene cluster that mediates the biosynthesis of botrydial. Botrydial is necessary for colonization of plant tissue by the T4 strain. It is a strain-dependent virulence factor since highly aggressive strains like SAS56 or B05 still retain substantial virulence when botrydial synthesis is impaired, since they produce also botcinic acid. The first step of botrydial biosynthesis is performed by the sesquiterpene synthase BOT2 which catalyzes the cyclization of farnesyl diphosphate (FPP) to presilphiperfolan-8-beta-ol (PSP). The cytochrome P450 monooxygenase BOT4 then catalyzes the hydroxylation at C-4 to give a probotryane intermediate. Acetylation of the hydroxyl at C-4 is carried out by the acetyltransferase BOT5, followed by the combined action of the P450 monooxygenases BOT3 and BOT1, to yield finally the glycol, via the regio- and stereospecific hydroxylations at C-10 and C-15 of the probotryane intermediates, respectively. The cleavage of the C10-C15 bond of probotryane skeleton is an intriguing and chemically important reaction, which could be mediated by some of the monooxygenases or by a combination of them. It is possible that either BOT3 or BOT1 would oxidize either the 10- or the 15-hydroxy group to the hydroperoxide derivative, which would then undergo heterolytic fragmentation to give the dialdehyde botrydial. Finally, the dehydrogenase BOT7 might be involved in the conversion of botrydial to dihydrobotrydial. The chain is Acetyltransferase BOT5 from Botryotinia fuckeliana (Noble rot fungus).